Here is a 406-residue protein sequence, read N- to C-terminus: Cysteine desulfurase (406 aa).

An N6-(pyridoxal phosphate)lysine modification is found at lysine 226. Cysteine 364 functions as the Cysteine persulfide intermediate in the catalytic mechanism.

The protein belongs to the class-V pyridoxal-phosphate-dependent aminotransferase family. Csd subfamily. As to quaternary structure, homodimer. Interacts with SufE and the SufBCD complex composed of SufB, SufC and SufD. The interaction with SufE is required to mediate the direct transfer of the sulfur atom from the S-sulfanylcysteine. Pyridoxal 5'-phosphate serves as cofactor.

It is found in the cytoplasm. The enzyme catalyses (sulfur carrier)-H + L-cysteine = (sulfur carrier)-SH + L-alanine. It carries out the reaction L-selenocysteine + AH2 = hydrogenselenide + L-alanine + A + H(+). Its pathway is cofactor biosynthesis; iron-sulfur cluster biosynthesis. In terms of biological role, cysteine desulfurases mobilize the sulfur from L-cysteine to yield L-alanine, an essential step in sulfur metabolism for biosynthesis of a variety of sulfur-containing biomolecules. Component of the suf operon, which is activated and required under specific conditions such as oxidative stress and iron limitation. Acts as a potent selenocysteine lyase in vitro, that mobilizes selenium from L-selenocysteine. Selenocysteine lyase activity is however unsure in vivo. This is Cysteine desulfurase from Yersinia pseudotuberculosis serotype O:1b (strain IP 31758).